Here is a 271-residue protein sequence, read N- to C-terminus: Phosphatidylglycerol--prolipoprotein diacylglyceryl transferase (271 aa).

The next 3 membrane-spanning stretches (helical) occupy residues Leu-17–Ala-37, Ile-63–Tyr-83, and Ile-95–Ser-115. Arg-146 provides a ligand contact to a 1,2-diacyl-sn-glycero-3-phospho-(1'-sn-glycerol). A run of 3 helical transmembrane segments spans residues Ser-182–Ala-202, Gly-209–Phe-229, and Met-243–Trp-263.

The protein belongs to the Lgt family.

The protein localises to the cell inner membrane. It carries out the reaction L-cysteinyl-[prolipoprotein] + a 1,2-diacyl-sn-glycero-3-phospho-(1'-sn-glycerol) = an S-1,2-diacyl-sn-glyceryl-L-cysteinyl-[prolipoprotein] + sn-glycerol 1-phosphate + H(+). The protein operates within protein modification; lipoprotein biosynthesis (diacylglyceryl transfer). Catalyzes the transfer of the diacylglyceryl group from phosphatidylglycerol to the sulfhydryl group of the N-terminal cysteine of a prolipoprotein, the first step in the formation of mature lipoproteins. In Polaromonas naphthalenivorans (strain CJ2), this protein is Phosphatidylglycerol--prolipoprotein diacylglyceryl transferase.